Consider the following 189-residue polypeptide: Large ribosomal subunit protein uL5 (189 aa).

This sequence belongs to the universal ribosomal protein uL5 family. In terms of assembly, part of the 50S ribosomal subunit; part of the 5S rRNA/L5/L18/L25 subcomplex. Contacts the 5S rRNA and the P site tRNA. Forms a bridge to the 30S subunit in the 70S ribosome.

Functionally, this is one of the proteins that bind and probably mediate the attachment of the 5S RNA into the large ribosomal subunit, where it forms part of the central protuberance. In the 70S ribosome it contacts protein S13 of the 30S subunit (bridge B1b), connecting the 2 subunits; this bridge is implicated in subunit movement. Contacts the P site tRNA; the 5S rRNA and some of its associated proteins might help stabilize positioning of ribosome-bound tRNAs. This Kocuria rhizophila (strain ATCC 9341 / DSM 348 / NBRC 103217 / DC2201) protein is Large ribosomal subunit protein uL5.